The sequence spans 146 residues: Flagellar assembly factor FliW (146 aa).

The protein belongs to the FliW family. As to quaternary structure, interacts with translational regulator CsrA and flagellin(s).

The protein resides in the cytoplasm. In terms of biological role, acts as an anti-CsrA protein, binds CsrA and prevents it from repressing translation of its target genes, one of which is flagellin. Binds to flagellin and participates in the assembly of the flagellum. The sequence is that of Flagellar assembly factor FliW from Shouchella clausii (strain KSM-K16) (Alkalihalobacillus clausii).